A 223-amino-acid polypeptide reads, in one-letter code: MSERKAFVSRITNETKIQIAISLNGGHIEIKDSILCKKQQENGSDVAAQTTKSQVIDIQTGVGFLDHMIHALAKHSGWSLIVECIGDLHIDDHHTTEDCGIALGQAFKEALGQVRGVKRFGTGFAPLDEALSRAVVDLSNRPYAVIDLGLKREKIGDLSTEMIPHFLESFAEAARLTIHVDCLRGFNDHHRSESAFKALAVAIRESLAPNGTNDVPSTKGVLM.

The protein belongs to the imidazoleglycerol-phosphate dehydratase family.

The catalysed reaction is D-erythro-1-(imidazol-4-yl)glycerol 3-phosphate = 3-(imidazol-4-yl)-2-oxopropyl phosphate + H2O. Its pathway is amino-acid biosynthesis; L-histidine biosynthesis; L-histidine from 5-phospho-alpha-D-ribose 1-diphosphate: step 6/9. This chain is Imidazoleglycerol-phosphate dehydratase (HIS3), found in Torulaspora delbrueckii (Yeast).